Consider the following 159-residue polypeptide: Putative RING-H2 finger protein ATL69 (159 aa).

Residues 13-33 (LGYGIAIAVSILVLISFIMLA) form a helical membrane-spanning segment. An RING-type; atypical zinc finger spans residues 94–136 (CSICLCDYEAREPVRCIPECNHCFHTDCVDEWLRTSATCPLCR).

It belongs to the RING-type zinc finger family. ATL subfamily.

The protein localises to the membrane. It catalyses the reaction S-ubiquitinyl-[E2 ubiquitin-conjugating enzyme]-L-cysteine + [acceptor protein]-L-lysine = [E2 ubiquitin-conjugating enzyme]-L-cysteine + N(6)-ubiquitinyl-[acceptor protein]-L-lysine.. Its pathway is protein modification; protein ubiquitination. The chain is Putative RING-H2 finger protein ATL69 (ATL69) from Arabidopsis thaliana (Mouse-ear cress).